Consider the following 104-residue polypeptide: Large ribosomal subunit protein uL23 (104 aa).

Belongs to the universal ribosomal protein uL23 family. In terms of assembly, part of the 50S ribosomal subunit. Contacts protein L29, and trigger factor when it is bound to the ribosome.

Functionally, one of the early assembly proteins it binds 23S rRNA. One of the proteins that surrounds the polypeptide exit tunnel on the outside of the ribosome. Forms the main docking site for trigger factor binding to the ribosome. The protein is Large ribosomal subunit protein uL23 of Leptospira interrogans serogroup Icterohaemorrhagiae serovar copenhageni (strain Fiocruz L1-130).